A 227-amino-acid chain; its full sequence is DNA packaging ATPase P9 (227 aa).

16–23 (GKTGTGKT) contributes to the ATP binding site.

In terms of assembly, heterodimer of P6 and P9; further multimerizes as hexamers of heterodimers. Part of the dodecameric portal complex that is composed of the packaging efficiency factor P6, the DNA packaging ATPase P9, and the internal heterododecamer P20/P22 which spans the virion inner membrane.

It localises to the virion. Together with the packaging efficiency factor P6, forms the external part of the portal vertex that is embeded in the capsid and which plays critical roles in genome packaging and genome ejection. Both proteins multimerize as a single ring-shaped heterdodecamer arranged around a central channel. In Enterobacteria phage PRD1 (Bacteriophage PRD1), this protein is DNA packaging ATPase P9 (IX).